The chain runs to 408 residues: Exodeoxyribonuclease 7 large subunit (408 aa).

Belongs to the XseA family. As to quaternary structure, heterooligomer composed of large and small subunits.

It localises to the cytoplasm. It carries out the reaction Exonucleolytic cleavage in either 5'- to 3'- or 3'- to 5'-direction to yield nucleoside 5'-phosphates.. Bidirectionally degrades single-stranded DNA into large acid-insoluble oligonucleotides, which are then degraded further into small acid-soluble oligonucleotides. The protein is Exodeoxyribonuclease 7 large subunit of Alkaliphilus oremlandii (strain OhILAs) (Clostridium oremlandii (strain OhILAs)).